The chain runs to 70 residues: MPGIKVYPNESFDEAYRRFKKQTDRNLVVTEVSARRFFEPMTEIRKKQKISARKKMLKRLYMLRRYESKL.

Belongs to the bacterial ribosomal protein bS21 family.

In Campylobacter hominis (strain ATCC BAA-381 / DSM 21671 / CCUG 45161 / LMG 19568 / NCTC 13146 / CH001A), this protein is Small ribosomal subunit protein bS21.